A 595-amino-acid chain; its full sequence is Guanylate-binding protein 3 (595 aa).

Positions 1-309 (MAPEIHMTGP…NAISRGDLPC (309 aa)) are GTPase domain (Globular). A GB1/RHD3-type G domain is found at 35 to 276 (TQPVVVVAIV…FCSYIFSNSK (242 aa)). Residues 45-52 (GLYRTGKS), 67-69 (LGS), and 97-101 (DTEGL) contribute to the GTP site. Residues 482-595 (EKEKEIEVEC…KRYMSHKLKI (114 aa)) adopt a coiled-coil conformation.

The protein belongs to the TRAFAC class dynamin-like GTPase superfamily. GB1/RHD3 GTPase family. GB1 subfamily. As to quaternary structure, heterodimer with other family members, including GBP1, GBP2 and GBP5. Dimerization regulates subcellular location.

The protein resides in the cytoplasm. The protein localises to the perinuclear region. Its subcellular location is the golgi apparatus membrane. The catalysed reaction is GTP + H2O = GDP + phosphate + H(+). In terms of biological role, interferon (IFN)-inducible GTPase that plays important roles in innate immunity against a diverse range of bacterial, viral and protozoan pathogens. Hydrolyzes GTP very efficiently; GDP rather than GMP is the major reaction product. Following infection, recruited to the pathogen-containing vacuoles or vacuole-escaped bacteria and acts as a positive regulator of inflammasome assembly by promoting the release of inflammasome ligands from bacteria. Acts by promoting lysis of pathogen-containing vacuoles, releasing pathogens into the cytosol. Following pathogen release in the cytosol, promotes recruitment of proteins that mediate bacterial cytolysis: this liberates ligands that are detected by inflammasomes, such as lipopolysaccharide (LPS) that activates the non-canonical CASP4/CASP11 inflammasome or double-stranded DNA (dsDNA) that activates the AIM2 inflammasome. Exhibits antiviral activity against influenza virus. Its function is as follows. Shows the most prominent antiviral activity in epithelial cells. This Homo sapiens (Human) protein is Guanylate-binding protein 3 (GBP3).